The primary structure comprises 949 residues: Leucine--tRNA ligase (949 aa).

The 'HIGH' region motif lies at P68–H79. Residues V540–G562 form a disordered region. The 'KMSKS' region signature appears at K722–S726. K725 lines the ATP pocket.

Belongs to the class-I aminoacyl-tRNA synthetase family.

The protein resides in the cytoplasm. It carries out the reaction tRNA(Leu) + L-leucine + ATP = L-leucyl-tRNA(Leu) + AMP + diphosphate. This chain is Leucine--tRNA ligase, found in Mycolicibacterium gilvum (strain PYR-GCK) (Mycobacterium gilvum (strain PYR-GCK)).